A 315-amino-acid chain; its full sequence is Beta-ketoacyl-[acyl-carrier-protein] synthase III (315 aa).

Residues Cys-115 and His-244 contribute to the active site. The ACP-binding stretch occupies residues 245–249 (QANAR). Asn-274 is a catalytic residue.

It belongs to the thiolase-like superfamily. FabH family. Homodimer.

The protein resides in the cytoplasm. It carries out the reaction malonyl-[ACP] + acetyl-CoA + H(+) = 3-oxobutanoyl-[ACP] + CO2 + CoA. It participates in lipid metabolism; fatty acid biosynthesis. Its function is as follows. Catalyzes the condensation reaction of fatty acid synthesis by the addition to an acyl acceptor of two carbons from malonyl-ACP. Catalyzes the first condensation reaction which initiates fatty acid synthesis and may therefore play a role in governing the total rate of fatty acid production. Possesses both acetoacetyl-ACP synthase and acetyl transacylase activities. Its substrate specificity determines the biosynthesis of branched-chain and/or straight-chain of fatty acids. The polypeptide is Beta-ketoacyl-[acyl-carrier-protein] synthase III (Rubrobacter xylanophilus (strain DSM 9941 / JCM 11954 / NBRC 16129 / PRD-1)).